Reading from the N-terminus, the 121-residue chain is Small ribosomal subunit protein uS10 (121 aa).

S2 is subject to N-acetylserine. Glycyl lysine isopeptide (Lys-Gly) (interchain with G-Cter in ubiquitin) cross-links involve residues K6, K8, K21, K32, and K101.

The protein belongs to the universal ribosomal protein uS10 family. Component of the small ribosomal subunit (SSU). Mature yeast ribosomes consist of a small (40S) and a large (60S) subunit. The 40S small subunit contains 1 molecule of ribosomal RNA (18S rRNA) and 33 different proteins (encoded by 57 genes). The large 60S subunit contains 3 rRNA molecules (25S, 5.8S and 5S rRNA) and 46 different proteins (encoded by 81 genes). Post-translationally, ubiquitinated at Lys-6 and Lys-8 by HEL2, to activate the ribosome quality control (RQC) pathway in response to stalled ribosomes. In terms of processing, N-terminally acetylated by acetyltransferase NatA. Also partially acetylated by NatC.

It is found in the cytoplasm. In terms of biological role, component of the ribosome, a large ribonucleoprotein complex responsible for the synthesis of proteins in the cell. The small ribosomal subunit (SSU) binds messenger RNAs (mRNAs) and translates the encoded message by selecting cognate aminoacyl-transfer RNA (tRNA) molecules. The large subunit (LSU) contains the ribosomal catalytic site termed the peptidyl transferase center (PTC), which catalyzes the formation of peptide bonds, thereby polymerizing the amino acids delivered by tRNAs into a polypeptide chain. The nascent polypeptides leave the ribosome through a tunnel in the LSU and interact with protein factors that function in enzymatic processing, targeting, and the membrane insertion of nascent chains at the exit of the ribosomal tunnel. This is Small ribosomal subunit protein uS10 from Saccharomyces cerevisiae (strain ATCC 204508 / S288c) (Baker's yeast).